The following is a 182-amino-acid chain: Ribosome maturation factor RimM (182 aa).

Positions 103 to 182 constitute a PRC barrel domain; the sequence is EDDYYWKDLM…RVEVDWDPGF (80 aa).

Belongs to the RimM family. As to quaternary structure, binds ribosomal protein uS19.

Its subcellular location is the cytoplasm. Its function is as follows. An accessory protein needed during the final step in the assembly of 30S ribosomal subunit, possibly for assembly of the head region. Essential for efficient processing of 16S rRNA. May be needed both before and after RbfA during the maturation of 16S rRNA. It has affinity for free ribosomal 30S subunits but not for 70S ribosomes. The sequence is that of Ribosome maturation factor RimM from Yersinia pestis (strain Pestoides F).